The chain runs to 126 residues: Large ribosomal subunit protein bL12 (126 aa).

Belongs to the bacterial ribosomal protein bL12 family. As to quaternary structure, homodimer. Part of the ribosomal stalk of the 50S ribosomal subunit. Forms a multimeric L10(L12)X complex, where L10 forms an elongated spine to which 2 to 4 L12 dimers bind in a sequential fashion. Binds GTP-bound translation factors.

In terms of biological role, forms part of the ribosomal stalk which helps the ribosome interact with GTP-bound translation factors. Is thus essential for accurate translation. This chain is Large ribosomal subunit protein bL12, found in Koribacter versatilis (strain Ellin345).